The following is a 1122-amino-acid chain: Adhesin P1 (1122 aa).

The N-terminal stretch at 1–26 (MKKLIFKLSVGITPLALIGLGSFGLA) is a signal peptide. Disordered stretches follow at residues 182 to 208 (ATGDTSAEGSATPAGGGSSSSAAGGGA), 244 to 273 (DYNSDQNKIPKPKTLLDSSESSESINGGRT), and 541 to 562 (GALQNSGNPQPTSTPMPNSNGN). Gly residues predominate over residues 195-208 (AGGGSSSSAAGGGA). Residues 259 to 273 (LDSSESSESINGGRT) show a composition bias toward polar residues. Residues 1001-1021 (AISIPIIIIALALALGLGIGI) traverse the membrane as a helical segment. The disordered stretch occupies residues 1066–1122 (KTPQMLQANKKDGASSPSKPSAPAAKKPAGPTKPSAPGAKPTAPAKPKAPAPTKKIE). Over residues 1079–1122 (ASSPSKPSAPAAKKPAGPTKPSAPGAKPTAPAKPKAPAPTKKIE) the composition is skewed to low complexity.

This sequence belongs to the adhesin P1 family.

Its subcellular location is the cell membrane. Its function is as follows. Could be involved in cytadherence. This is Adhesin P1 (gapA) from Mycoplasmoides gallisepticum (strain R(low / passage 15 / clone 2)) (Mycoplasma gallisepticum).